Reading from the N-terminus, the 259-residue chain is Ditrans,polycis-undecaprenyl-diphosphate synthase ((2E,6E)-farnesyl-diphosphate specific) (259 aa).

The active site involves Asp-32. Asp-32 serves as a coordination point for Mg(2+). Residues 33-36, Trp-37, Arg-45, His-49, and 77-79 contribute to the substrate site; these read GNGR and STE. Residue Asn-80 is the Proton acceptor of the active site. Substrate contacts are provided by residues Trp-81, Arg-83, Arg-203, and 209-211; that span reads RIS. Position 222 (Glu-222) interacts with Mg(2+).

It belongs to the UPP synthase family. In terms of assembly, homodimer. The cofactor is Mg(2+).

It catalyses the reaction 8 isopentenyl diphosphate + (2E,6E)-farnesyl diphosphate = di-trans,octa-cis-undecaprenyl diphosphate + 8 diphosphate. Catalyzes the sequential condensation of isopentenyl diphosphate (IPP) with (2E,6E)-farnesyl diphosphate (E,E-FPP) to yield (2Z,6Z,10Z,14Z,18Z,22Z,26Z,30Z,34E,38E)-undecaprenyl diphosphate (di-trans,octa-cis-UPP). UPP is the precursor of glycosyl carrier lipid in the biosynthesis of bacterial cell wall polysaccharide components such as peptidoglycan and lipopolysaccharide. The protein is Ditrans,polycis-undecaprenyl-diphosphate synthase ((2E,6E)-farnesyl-diphosphate specific) (uppS) of Lactiplantibacillus plantarum (strain ATCC BAA-793 / NCIMB 8826 / WCFS1) (Lactobacillus plantarum).